Reading from the N-terminus, the 461-residue chain is Transcriptional activator RocR (461 aa).

At Asp57 the chain carries 4-aspartylphosphate. One can recognise a Sigma-54 factor interaction domain in the interval 143-372; it reads ILGTSPAIQD…EHMIEGAMNF (230 aa). ATP is bound by residues 171–178 and 233–242; these read GETGTGKE and AHGGTLLLDE. A DNA-binding region (H-T-H motif) is located at residues 434-453; it reads ISKAAQELGISRQSLQYRLK.

Functionally, positive regulator of arginine catabolism. Controls the transcription of the two operons rocABC and rocDEF and probably acts by binding to the corresponding upstream activating sequences. The polypeptide is Transcriptional activator RocR (rocR) (Bacillus subtilis (strain 168)).